A 246-amino-acid chain; its full sequence is Acetoacetate decarboxylase (246 aa).

Residue Lys-116 is the Schiff-base intermediate with acetoacetate of the active site.

Belongs to the ADC family.

The enzyme catalyses acetoacetate + H(+) = acetone + CO2. Its function is as follows. Catalyzes the conversion of acetoacetate to acetone and carbon dioxide. In Burkholderia ambifaria (strain MC40-6), this protein is Acetoacetate decarboxylase.